The sequence spans 594 residues: Chitooligosaccharidolytic beta-N-acetylglucosaminidase (594 aa).

A signal peptide spans 1–22 (MWSRRIPLFIFGVLVLILSVAA). Disulfide bonds link C31/C59 and C36/C55. The N-linked (GlcNAc...) asparagine glycan is linked to N164. Residues D249 and H303 each act as charge relay system in the active site. Disulfide bonds link C316–C373 and C326–C331. The Charge relay system role is filled by E368. Residue N375 is glycosylated (N-linked (GlcNAc...) asparagine). 2 disulfide bridges follow: C478–C491 and C585–C592.

It belongs to the glycosyl hydrolase 20 family. As to quaternary structure, homodimer.

It carries out the reaction Hydrolysis of terminal non-reducing N-acetyl-D-hexosamine residues in N-acetyl-beta-D-hexosaminides.. With respect to regulation, inhibited by O-(2-acetamido-2-deoxy-D-glucopyransylidene)-amino-N-phenylcarbamate (PUGNAc). Inhibited by thiabendazole (TMG)-chitotriomycin. Inhibited by 6-(dimethylamino)-2-(2-(((5-methyl-1,3,4-thiadiazol-2-yl)methyl)amino)ethyl)- 1H-benzo[de]isoquinoline-1,3(2H)-dione (Q2), a synthesized non-carbohydrate unsymmetrical dyad of naphthalimide and thiadiazole having a dimethylamino group at C4 of the naphthalimide. Inhibited poorly by N-acetyl-glucosamine (NAG)-thiazoline (NGT), but when the thiazoline ring of NGT is replaced by a bulky substituent such as in compound 1,2-dideoxy-2'-methylamino-alpha-D-glucopyranoso-[2,1-d]-Delta2'-thiazoline (NMAGT), the inhibition constant Ki is lowered 600-fold compared to that of NGT. Inhibited by berberine, berberine analogs thalifendine and palmatine, and berberine derivative SYSU-1, but not by berberine analog tetrahydroberberine. Hydrolyzes one beta-GlcNAc unit at a time from the non-reducing ends of substrates, with a preference for shorter substrates. The 2-acetamido group and the beta-glycoside bond linkage in the substrate are required for its activity. Active with p-nitrophenyl (pNP)-beta-GlcNAc, pNP-beta-GalNAc and chitooligosaccharides (degree of polymerization from 2 to 6), but not with the complex N-glycan substrate (GlcNAcbeta-1,2Manalpha-1,6)(GlcNAcbeta-1,2Manalpha-1,3)Manbeta-1,4GlcNAcbeta-1,4GlcNAc-PA (GnGn-PA), pNP-alpha-GlcNAc or with the long polymer colloidal chitin. Involved in chitin catabolism. Involved in the degradation of old cuticle during the pupation stage. This Ostrinia furnacalis (Asian corn borer) protein is Chitooligosaccharidolytic beta-N-acetylglucosaminidase.